Here is a 78-residue protein sequence, read N- to C-terminus: Major outer membrane lipoprotein Lpp (78 aa).

A signal peptide spans 1 to 20 (MNRTKLVLGAVILGSTLLAG). Residue C21 is the site of N-palmitoyl cysteine attachment. A lipid anchor (S-diacylglycerol cysteine) is attached at C21. Repeats lie at residues 24-34 (NAKIDQLSSDV) and 38-48 (NAKVDQLSNDV). The stretch at 27-75 (IDQLSSDVQTLNAKVDQLSNDVNAIRSDVQAAKDDAARANQRLDNQVRT) forms a coiled coil. An N6-murein peptidoglycan lysine modification is found at K78.

This sequence belongs to the Lpp family. As to quaternary structure, homotrimer.

The protein localises to the cell outer membrane. It localises to the secreted. The protein resides in the cell wall. A highly abundant outer membrane lipoprotein that controls the distance between the inner and outer membranes. The only protein known to be covalently linked to the peptidoglycan network (PGN). Also non-covalently binds the PGN. The link between the cell outer membrane and PGN contributes to maintenance of the structural and functional integrity of the cell envelope, and maintains the correct distance between the PGN and the outer membrane. In Pectobacterium atrosepticum (strain SCRI 1043 / ATCC BAA-672) (Erwinia carotovora subsp. atroseptica), this protein is Major outer membrane lipoprotein Lpp.